We begin with the raw amino-acid sequence, 566 residues long: Deformed epidermal autoregulatory factor 1 homolog (566 aa).

Disordered stretches follow at residues 33–62 (AESEAEEPVLSRDEDSEEDADSEAERETRR) and 163–191 (GLKGPAAPLTPGPQSPPTPLAPGQEKGGT). Positions 170–182 (PLTPGPQSPPTPL) are enriched in pro residues. A Phosphothreonine modification is found at Thr-172. Ser-177 carries the phosphoserine modification. Thr-180 carries the post-translational modification Phosphothreonine. The 81-residue stretch at 194–274 (NWDPSVYDSE…QCLIQDGILN (81 aa)) folds into the SAND domain. The short motif at 300-306 (PYKRRKK) is the Nuclear localization signal element. An interaction with LMO4 region spans residues 404–479 (IAPFPEAALP…QLKTLFEQAK (76 aa)). Thr-433 carries the post-translational modification Phosphothreonine. A phosphoserine mark is found at Ser-444 and Ser-449. Zn(2+)-binding residues include Cys-505, Cys-508, Cys-516, Cys-519, Cys-525, Cys-529, His-537, and Cys-541. An MYND-type zinc finger spans residues 505 to 541 (CVNCGREAMSECTGCHKVNYCSTFCQRKDWKDHQHVC).

As to quaternary structure, homodimer. Isoform 1 and isoform 2 may form a heterodimer. May interact with the corepressors NCOR1 and NCRO2. Identified in a complex with XRCC5 and XRCC6. Interacts (via the SAND domain) with the DNA-PK complex subunit XRCC6; the interaction is direct with XRCC6 and may be inhibited by DNA-binding. Interacts with LMO4; LMO4 blocks export from nucleus. Interacts with LMO2 and CLIM2. In terms of processing, may be phosphorylated by DNA-PK complex in a DNA independent manner (in vitro). In terms of tissue distribution, ubiquitously expressed during embryogenesis, with higher expression in regions of the central nervous system, dorsal root ganglia, submandibular gland, epidermis and breast. In 12-week-old NOD mice, expression of isoform 2 is sevenfold higher in lymph node stromal elements than in T-cells and tenfold higher than in B-cells.

It localises to the nucleus. The protein localises to the cytoplasm. Functionally, transcription factor that binds to sequence with multiple copies of 5'-TTC[CG]G-3' present in its own promoter and that of the HNRPA2B1 gene. Down-regulates transcription of these genes. Binds to the retinoic acid response element (RARE) 5'-AGGGTTCACCGAAAGTTCA-3'. Activates the proenkephalin gene independently of promoter binding, probably through protein-protein interaction. Regulates epithelial cell proliferation and side-branching in the mammary gland. Required for neural tube closure and skeletal patterning. Controls the expression of peripheral tissue antigens in pancreatic lymph nodes. Isoform 1 displays greater transcriptional activity than isoform 2. Isoform 2 may inhibit transcriptional activity of isoform 1 by interacting with it and retaining it in the cytoplasm. Transcriptional activator of EIF4G3. May also involved in behavior. The protein is Deformed epidermal autoregulatory factor 1 homolog (Deaf1) of Mus musculus (Mouse).